Here is a 263-residue protein sequence, read N- to C-terminus: Post-GPI attachment to proteins factor 2 (263 aa).

Transmembrane regions (helical) follow at residues 16–36, 69–89, 109–129, 143–163, 180–200, and 208–228; these read FVIC…ILSL, YIWR…AIAF, FLCN…LALT, CFGG…WLFN, YKIL…YLYW, and PGIY…NIFF.

Belongs to the PGAP2 family.

It localises to the golgi apparatus membrane. It is found in the endoplasmic reticulum membrane. Functionally, involved in the lipid remodeling steps of GPI-anchor maturation. Required for stable expression of GPI-anchored proteins at the cell surface. The polypeptide is Post-GPI attachment to proteins factor 2 (Caenorhabditis elegans).